We begin with the raw amino-acid sequence, 334 residues long: Fructose-1,6-bisphosphatase class 1 (334 aa).

The Mg(2+) site is built by glutamate 90, aspartate 113, leucine 115, and aspartate 116. Substrate is bound by residues 116–119 (DGSS), asparagine 209, tyrosine 242, and lysine 272. Residue glutamate 278 participates in Mg(2+) binding.

It belongs to the FBPase class 1 family. In terms of assembly, homotetramer. Mg(2+) serves as cofactor.

The protein resides in the cytoplasm. It carries out the reaction beta-D-fructose 1,6-bisphosphate + H2O = beta-D-fructose 6-phosphate + phosphate. Its pathway is carbohydrate biosynthesis; gluconeogenesis. In Haemophilus ducreyi (strain 35000HP / ATCC 700724), this protein is Fructose-1,6-bisphosphatase class 1.